The following is a 354-amino-acid chain: Ferredoxin--NADP reductase (354 aa).

FAD-binding residues include aspartate 39, glutamine 47, tyrosine 52, valine 92, phenylalanine 127, aspartate 296, and threonine 337.

It belongs to the ferredoxin--NADP reductase type 2 family. As to quaternary structure, homodimer. FAD is required as a cofactor.

It catalyses the reaction 2 reduced [2Fe-2S]-[ferredoxin] + NADP(+) + H(+) = 2 oxidized [2Fe-2S]-[ferredoxin] + NADPH. The chain is Ferredoxin--NADP reductase from Albidiferax ferrireducens (strain ATCC BAA-621 / DSM 15236 / T118) (Rhodoferax ferrireducens).